Reading from the N-terminus, the 535-residue chain is Atrial natriuretic peptide receptor 3 (535 aa).

Residues 1–26 (MRSLLLFTFSACVLLARALLAGGASS) form the signal peptide. A propeptide spanning residues 27 to 40 (GGGDTGPGNRRRER) is cleaved from the precursor. The Extracellular segment spans residues 41 to 477 (EALAAQKIEV…CKSCGLEESA (437 aa)). N-linked (GlcNAc...) asparagine glycosylation is present at asparagine 81. Disulfide bonds link cysteine 103–cysteine 131 and cysteine 208–cysteine 256. Asparagine 288 and asparagine 389 each carry an N-linked (GlcNAc...) asparagine glycan. The helical transmembrane segment at 478 to 498 (VTGIVVGALLGAGLLMAFYFF) threads the bilayer. Topologically, residues 499 to 535 (RKKYRITIERRNHQEESNIGKHRELREDSIRSHFSVA) are cytoplasmic.

It belongs to the ANF receptor family. Homodimer; disulfide-linked. Interacts with OSTN.

The protein localises to the cell membrane. In terms of biological role, receptor for the natriuretic peptide hormones, binding with similar affinities atrial natriuretic peptide NPPA/ANP, brain natriuretic peptide NPPB/BNP, and C-type natriuretic peptide NPPC/CNP. May function as a clearance receptor for NPPA, NPPB and NPPC, regulating their local concentrations and effects. Acts as a regulator of osteoblast differentiation and bone growth by binding to its ligand osteocrin, thereby preventing binding between NPR3/NPR-C and natriuretic peptides, leading to increase cGMP production. This is Atrial natriuretic peptide receptor 3 (Npr3) from Rattus norvegicus (Rat).